The primary structure comprises 2804 residues: Nipped-B-like protein (2804 aa).

Polar residues-rich tracts occupy residues 128 to 173 (LSQN…QNSP) and 191 to 208 (HPSSYTTHPQMQQASVSS). The segment at 128-340 (LSQNSMHSSP…LGKDEKEQSE (213 aa)) is disordered. 2 positions are modified to phosphoserine: Ser-150 and Ser-162. A compositionally biased stretch (basic and acidic residues) spans 234-249 (HHADNPRHGSSEDYLH). A phosphoserine mark is found at Ser-243, Ser-256, Ser-274, Ser-280, Ser-284, Ser-301, Ser-306, and Ser-318. The span at 331–340 (LGKDEKEQSE) shows a compositional bias: basic and acidic residues. Ser-350 carries the phosphoserine modification. Residues 482-500 (RESAIERERFSKEVQDKDK) show a composition bias toward basic and acidic residues. Residues 482-946 (RESAIERERF…NKAEFPSYLL (465 aa)) form a disordered region. Over residues 523 to 534 (PASQETGSTGNG) the composition is skewed to polar residues. 4 stretches are compositionally biased toward basic and acidic residues: residues 562-572 (DSIKKPEEIKQ), 593-663 (PENH…ECKQ), 672-685 (KQNENRLSDTKPND), and 694-939 (ETTK…DNKA). Phosphothreonine is present on residues Thr-713 and Thr-746. Position 912 is a phosphoserine (Ser-912). Residues 996–1009 (NKGAKPVVVLQKLS) carry the PxVxL motif motif. Disordered stretches follow at residues 1017–1047 (IKDREDKSRSSLKPIKNKPSKSNKGSIDQSV) and 1060–1191 (ESTM…LTPE). Lys-1082 bears the N6-acetyllysine mark. 3 positions are modified to phosphoserine: Ser-1089, Ser-1090, and Ser-1096. Positions 1089–1100 (SSDEDNDSDEAF) are enriched in acidic residues. Basic and acidic residues predominate over residues 1109-1139 (KDDDKAWEYEERDRRSSGDHRRSGHSHEGRR). Phosphoserine occurs at positions 1150, 1152, and 1154. Tyr-1159 is subject to Phosphotyrosine. At Ser-1160 the chain carries Phosphoserine. The span at 1171-1182 (KMKKKEKQKKRK) shows a compositional bias: basic residues. A Phosphothreonine modification is found at Thr-1189. Ser-1197 is modified (phosphoserine). A disordered region spans residues 1691-1710 (AMKSQKDEESSEGTHHAKEI). HEAT repeat units lie at residues 1767 to 1805 (AQSFDIYLTQILRVLGENAIAVRTKAMKCLSEVVAVDPS), 1843 to 1881 (PQLAEQYYDMLIERILDTGISVRKRVIKILRDICIEQPT), 1945 to 1984 (YDWFEQLLQNLLKSEEDSSYKPVKKACTQLVDNLVEHILK), 2227 to 2267 (VNLK…LKEM), and 2313 to 2351 (LIHPVQCVPYLIAMGTDPEPAMRNKADQQLVEIDKKYAG). Basic and acidic residues predominate over residues 2473 to 2489 (VKDKRKERKSSPSKENE). Disordered stretches follow at residues 2473-2520 (VKDK…DDIN) and 2651-2696 (TSLL…DSTE). Ser-2493, Ser-2509, Ser-2511, Ser-2513, Ser-2515, Ser-2652, and Ser-2658 each carry phosphoserine. Acidic residues predominate over residues 2510-2519 (DSDSDSEDDI). Phosphothreonine is present on Thr-2667. Ser-2672 carries the phosphoserine modification.

Belongs to the SCC2/Nipped-B family. In terms of assembly, heterodimerizes with MAU2/SCC4 to form the cohesin loading complex. The NIPBL-MAU2 heterodimer interacts with the cohesin complex composed of SMC1A/B and SMC3 heterodimer, RAD21 and STAG1/SA1. NIPBL directly contacts all members of the complex, RAD21, SMC1A/B, SMC3 and STAG1. Interacts directly (via PxVxL motif) with CBX5. Interacts with ZNF609 (via N-terminus). Interacts with the multiprotein complex Integrator. Interacts (via PxVxL motif) with CBX3. Interacts with BRD4. As to expression, widely expressed. Highly expressed in heart, skeletal muscle, fetal and adult liver, fetal and adult kidney. Expressed at intermediates level in thymus, placenta, peripheral leukocyte and small intestine. Weakly or not expressed in brain, colon, spleen and lung.

It is found in the nucleus. Its subcellular location is the chromosome. Functionally, plays an important role in the loading of the cohesin complex on to DNA. Forms a heterodimeric complex (also known as cohesin loading complex) with MAU2/SCC4 which mediates the loading of the cohesin complex onto chromatin. Plays a role in cohesin loading at sites of DNA damage. Its recruitment to double-strand breaks (DSBs) sites occurs in a CBX3-, RNF8- and RNF168-dependent manner whereas its recruitment to UV irradiation-induced DNA damage sites occurs in a ATM-, ATR-, RNF8- and RNF168-dependent manner. Along with ZNF609, promotes cortical neuron migration during brain development by regulating the transcription of crucial genes in this process. Preferentially binds promoters containing paused RNA polymerase II. Up-regulates the expression of SEMA3A, NRP1, PLXND1 and GABBR2 genes, among others. The polypeptide is Nipped-B-like protein (NIPBL) (Homo sapiens (Human)).